Consider the following 134-residue polypeptide: ATP synthase epsilon chain (134 aa).

Residues 94-104 (AKLAKSRAESH) are compositionally biased toward basic and acidic residues. The interval 94–115 (AKLAKSRAESHLEDDDDNTDIN) is disordered.

Belongs to the ATPase epsilon chain family. F-type ATPases have 2 components, CF(1) - the catalytic core - and CF(0) - the membrane proton channel. CF(1) has five subunits: alpha(3), beta(3), gamma(1), delta(1), epsilon(1). CF(0) has three main subunits: a, b and c.

Its subcellular location is the cell membrane. Produces ATP from ADP in the presence of a proton gradient across the membrane. The polypeptide is ATP synthase epsilon chain (Staphylococcus epidermidis (strain ATCC 12228 / FDA PCI 1200)).